Here is a 397-residue protein sequence, read N- to C-terminus: Ubiquitin-like modifier-activating enzyme 5 (397 aa).

Positions 77, 98, 121, 144, and 178 each coordinate ATP. Residues Cys220 and Cys223 each contribute to the Zn(2+) site. Cys244 functions as the Glycyl thioester intermediate in the catalytic mechanism. Zn(2+) contacts are provided by Cys297 and Cys302.

The protein belongs to the ubiquitin-activating E1 family. UBA5 subfamily.

In terms of biological role, E1-like enzyme which activates UFM1. The protein is Ubiquitin-like modifier-activating enzyme 5 of Culex quinquefasciatus (Southern house mosquito).